A 485-amino-acid polypeptide reads, in one-letter code: Glutamate--tRNA ligase (485 aa).

The 'HIGH' region signature appears at 12-22; the sequence is PSPTGEPHVGT. The 'KMSKS' region signature appears at 253 to 257; that stretch reads KLSKR. An ATP-binding site is contributed by Lys256.

This sequence belongs to the class-I aminoacyl-tRNA synthetase family. Glutamate--tRNA ligase type 1 subfamily. As to quaternary structure, monomer.

It localises to the cytoplasm. It catalyses the reaction tRNA(Glu) + L-glutamate + ATP = L-glutamyl-tRNA(Glu) + AMP + diphosphate. Catalyzes the attachment of glutamate to tRNA(Glu) in a two-step reaction: glutamate is first activated by ATP to form Glu-AMP and then transferred to the acceptor end of tRNA(Glu). The protein is Glutamate--tRNA ligase of Sinorhizobium medicae (strain WSM419) (Ensifer medicae).